We begin with the raw amino-acid sequence, 111 residues long: Prostatic steroid-binding protein C1 (111 aa).

The first 23 residues, 1-23 (MSTIKLSLCLLIMLAVCCYEANA), serve as a signal peptide directing secretion.

The protein belongs to the secretoglobin family. Lipophilin subfamily. As to quaternary structure, prostatein is composed of three different peptides called C1, C2 and C3. These form covalent C1:C3 (F) and C2:C3 (S) heterodimers whose noncovalent association forms tetrameric (C1:C3/C3:C2) prostatein molecules.

The protein resides in the secreted. Part of prostatein which is the major secretory glycoprotein of ventral prostate gland. The chain is Prostatic steroid-binding protein C1 (Psbpc1) from Rattus norvegicus (Rat).